The primary structure comprises 198 residues: Holliday junction branch migration complex subunit RuvA (198 aa).

Residues 1–63 form a domain I region; sequence MYDYIKGQLT…EDAQLLFGFH (63 aa). Residues 64–142 form a domain II region; sequence SEEEKDVFLK…EAPKEESSKL (79 aa). The tract at residues 143–147 is flexible linker; that stretch reads PKAKH. The segment at 148-198 is domain III; the sequence is QENEQLDEAIEALLALGYKATELKKIRAFFEGTSETAEQYIKSALKMLMKG.

The protein belongs to the RuvA family. Homotetramer. Forms an RuvA(8)-RuvB(12)-Holliday junction (HJ) complex. HJ DNA is sandwiched between 2 RuvA tetramers; dsDNA enters through RuvA and exits via RuvB. An RuvB hexamer assembles on each DNA strand where it exits the tetramer. Each RuvB hexamer is contacted by two RuvA subunits (via domain III) on 2 adjacent RuvB subunits; this complex drives branch migration. In the full resolvosome a probable DNA-RuvA(4)-RuvB(12)-RuvC(2) complex forms which resolves the HJ.

It is found in the cytoplasm. Its function is as follows. The RuvA-RuvB-RuvC complex processes Holliday junction (HJ) DNA during genetic recombination and DNA repair, while the RuvA-RuvB complex plays an important role in the rescue of blocked DNA replication forks via replication fork reversal (RFR). RuvA specifically binds to HJ cruciform DNA, conferring on it an open structure. The RuvB hexamer acts as an ATP-dependent pump, pulling dsDNA into and through the RuvAB complex. HJ branch migration allows RuvC to scan DNA until it finds its consensus sequence, where it cleaves and resolves the cruciform DNA. In Streptococcus equi subsp. zooepidemicus (strain MGCS10565), this protein is Holliday junction branch migration complex subunit RuvA.